Reading from the N-terminus, the 79-residue chain is Small ribosomal subunit protein eS17 (79 aa).

The protein belongs to the eukaryotic ribosomal protein eS17 family.

The sequence is that of Small ribosomal subunit protein eS17 from Saccharolobus solfataricus (strain ATCC 35092 / DSM 1617 / JCM 11322 / P2) (Sulfolobus solfataricus).